A 288-amino-acid polypeptide reads, in one-letter code: Phytanoyl-CoA dioxygenase domain-containing protein 1 homolog (288 aa).

2-oxoglutarate contacts are provided by residues K95, M134, 149–151 (HVD), and W167. Positions 149 and 151 each coordinate Fe cation. H242 is a binding site for Fe cation. 2 residues coordinate 2-oxoglutarate: S244 and R253.

The protein belongs to the PhyH family. PHYHD1 subfamily. Fe cation serves as cofactor.

Its function is as follows. Has alpha-ketoglutarate-dependent dioxygenase activity. Does not show detectable activity towards fatty acid CoA thioesters. Is not expected to be active with phytanoyl CoA. The sequence is that of Phytanoyl-CoA dioxygenase domain-containing protein 1 homolog from Caenorhabditis elegans.